The sequence spans 233 residues: Large ribosomal subunit protein uL1 (233 aa).

It belongs to the universal ribosomal protein uL1 family. As to quaternary structure, part of the 50S ribosomal subunit.

Functionally, binds directly to 23S rRNA. The L1 stalk is quite mobile in the ribosome, and is involved in E site tRNA release. In terms of biological role, protein L1 is also a translational repressor protein, it controls the translation of the L11 operon by binding to its mRNA. The protein is Large ribosomal subunit protein uL1 of Hamiltonella defensa subsp. Acyrthosiphon pisum (strain 5AT).